The sequence spans 567 residues: Urease subunit alpha (567 aa).

In terms of domain architecture, Urease spans 129–567 (GGIDTHIHWI…LPMAQRYFLF (439 aa)). Residues histidine 134, histidine 136, and lysine 217 each contribute to the Ni(2+) site. An N6-carboxylysine modification is found at lysine 217. Histidine 219 lines the substrate pocket. Residues histidine 246 and histidine 272 each coordinate Ni(2+). Histidine 320 functions as the Proton donor in the catalytic mechanism. Aspartate 360 contributes to the Ni(2+) binding site.

It belongs to the metallo-dependent hydrolases superfamily. Urease alpha subunit family. As to quaternary structure, heterotrimer of UreA (gamma), UreB (beta) and UreC (alpha) subunits. Three heterotrimers associate to form the active enzyme. The apoenzyme interacts with an accessory complex composed of UreD, UreF and UreG, which is required for the assembly of the nickel containing metallocenter of UreC. The UreE protein may also play a direct role as a metallochaperone in nickel transfer to the urease apoprotein. The cofactor is Ni cation. Post-translationally, carboxylation allows a single lysine to coordinate two nickel ions.

It localises to the cytoplasm. The catalysed reaction is urea + 2 H2O + H(+) = hydrogencarbonate + 2 NH4(+). Its pathway is nitrogen metabolism; urea degradation; CO(2) and NH(3) from urea (urease route): step 1/1. The apoenzyme can be activated in vitro in the presence of nickel ions and carbon dioxide, which promotes carboxylation of Lys-217. This chain is Urease subunit alpha, found in Klebsiella aerogenes (Enterobacter aerogenes).